Reading from the N-terminus, the 209-residue chain is MAQQDVKPTRSELINLKKKIKLSESGHKLLKMKRDGLILEFFKILNEARNVRTELDAAFAKSTEKINLASAVNGMVAVRSTAFTAKESPEIQLSGHNIMGVVVPKISSTGVRKSLYERGYGIIGTNSYIDETADAYEDLVEKIITAAELETTMKRLLDEIEKTKRRVNALEFKVIPELIDTMKYIRFMLEEMERENTFRLKRVKARMRD.

Belongs to the V-ATPase D subunit family. As to quaternary structure, has multiple subunits, A(3), B(3), C, D, E, F, G, I and K(x); there may be a few other subunits as well.

Its subcellular location is the cell membrane. Functionally, component of the A-type ATP synthase that produces ATP from ADP in the presence of a proton gradient across the membrane. The protein is A-type ATP synthase subunit D of Methanosarcina mazei (strain ATCC BAA-159 / DSM 3647 / Goe1 / Go1 / JCM 11833 / OCM 88) (Methanosarcina frisia).